A 204-amino-acid polypeptide reads, in one-letter code: LexA repressor (204 aa).

The H-T-H motif DNA-binding region spans 28 to 48 (RAEIANRLGFKSANAAEEHLK). Catalysis depends on for autocatalytic cleavage activity residues Ser-121 and Lys-158.

It belongs to the peptidase S24 family. As to quaternary structure, homodimer.

The enzyme catalyses Hydrolysis of Ala-|-Gly bond in repressor LexA.. In terms of biological role, represses a number of genes involved in the response to DNA damage (SOS response), including recA and lexA. In the presence of single-stranded DNA, RecA interacts with LexA causing an autocatalytic cleavage which disrupts the DNA-binding part of LexA, leading to derepression of the SOS regulon and eventually DNA repair. In Shewanella frigidimarina (strain NCIMB 400), this protein is LexA repressor.